Here is a 197-residue protein sequence, read N- to C-terminus: Recombination protein RecR (197 aa).

The C4-type zinc finger occupies 56–71 (CQQCRNLSETEICGFC). The Toprim domain occupies 79–174 (DQLCIVETPT…SVTRLAQGIP (96 aa)).

Belongs to the RecR family.

In terms of biological role, may play a role in DNA repair. It seems to be involved in an RecBC-independent recombinational process of DNA repair. It may act with RecF and RecO. The sequence is that of Recombination protein RecR from Hydrogenovibrio crunogenus (strain DSM 25203 / XCL-2) (Thiomicrospira crunogena).